A 496-amino-acid chain; its full sequence is Lysosomal Pro-X carboxypeptidase (496 aa).

An N-terminal signal peptide occupies residues 1–21 (MGRRALLLLLLSFLAPWTTIA). A propeptide spanning residues 22–45 (LRPALRALGSLHLPTNPTSLPAVA) is cleaved from the precursor. N-linked (GlcNAc...) asparagine glycosylation is found at Asn47 and Asn101. The active-site Charge relay system is Ser179. An SKS domain region spans residues 194–334 (HMVVGALAAS…QNIFQALNVY (141 aa)). Cystine bridges form between Cys215-Cys372, Cys233-Cys310, Cys264-Cys343, and Cys364-Cys394. 3 N-linked (GlcNAc...) asparagine glycosylation sites follow: Asn317, Asn336, and Asn345. The N-linked (GlcNAc...) asparagine glycan is linked to Asn415. Active-site charge relay system residues include Asp430 and His455.

This sequence belongs to the peptidase S28 family. Homodimer.

It localises to the lysosome. It catalyses the reaction Cleavage of a -Pro-|-Xaa bond to release a C-terminal amino acid.. Cleaves C-terminal amino acids linked to proline in peptides such as angiotensin II, III and des-Arg9-bradykinin. This cleavage occurs at acidic pH, but enzymatic activity is retained with some substrates at neutral pH. This chain is Lysosomal Pro-X carboxypeptidase (PRCP), found in Pongo abelii (Sumatran orangutan).